The primary structure comprises 303 residues: AP2-like ethylene-responsive transcription factor At1g79700 (303 aa).

A compositionally biased stretch (basic residues) spans 1 to 10 (MAKVSGRSKK). The interval 1–55 (MAKVSGRSKKTIVDDEISDKTASASESASIALTSKRKRKSPPRNAPLQRSSPYRG) is disordered. Positions 20-32 (KTASASESASIAL) are enriched in polar residues. DNA-binding regions (AP2/ERF) lie at residues 52 to 118 (PYRG…LNFP) and 154 to 202 (KYRG…TNFD). The interval 212–259 (AADKADSDSKPIRSPSREPESSDDNKSPKSEEVIEPSTSPEVIPTRRS) is disordered. The span at 214-243 (DKADSDSKPIRSPSREPESSDDNKSPKSEE) shows a compositional bias: basic and acidic residues.

This sequence belongs to the AP2/ERF transcription factor family. AP2 subfamily.

The protein resides in the nucleus. Its function is as follows. Probably acts as a transcriptional activator. Binds to the GCC-box pathogenesis-related promoter element. May be involved in the regulation of gene expression by stress factors and by components of stress signal transduction pathways. This Arabidopsis thaliana (Mouse-ear cress) protein is AP2-like ethylene-responsive transcription factor At1g79700.